We begin with the raw amino-acid sequence, 266 residues long: 5'-nucleotidase SurE (266 aa).

Asp-10, Asp-11, Ser-41, and Asn-97 together coordinate a divalent metal cation.

It belongs to the SurE nucleotidase family. A divalent metal cation serves as cofactor.

It localises to the cytoplasm. It carries out the reaction a ribonucleoside 5'-phosphate + H2O = a ribonucleoside + phosphate. In terms of biological role, nucleotidase that shows phosphatase activity on nucleoside 5'-monophosphates. This is 5'-nucleotidase SurE from Methanocella arvoryzae (strain DSM 22066 / NBRC 105507 / MRE50).